We begin with the raw amino-acid sequence, 547 residues long: CTP synthase (547 aa).

The interval 1-266 (MTKYIFVTGG…GDYLVERLGL (266 aa)) is amidoligase domain. Serine 13 contributes to the CTP binding site. A UTP-binding site is contributed by serine 13. 14-19 (SVGKGI) provides a ligand contact to ATP. Tyrosine 54 is a binding site for L-glutamine. Aspartate 71 is a binding site for ATP. Mg(2+) contacts are provided by aspartate 71 and glutamate 141. CTP contacts are provided by residues 148–150 (DIE), 187–192 (KTKPTQ), and lysine 223. UTP-binding positions include 187–192 (KTKPTQ) and lysine 223. The region spanning 291–533 (PIALVGKYVE…IAAAAQTLLA (243 aa)) is the Glutamine amidotransferase type-1 domain. Position 353 (glycine 353) interacts with L-glutamine. Cysteine 380 serves as the catalytic Nucleophile; for glutamine hydrolysis. Residues 381 to 384 (LGMQ), glutamate 404, and arginine 461 each bind L-glutamine. Catalysis depends on residues histidine 506 and glutamate 508.

This sequence belongs to the CTP synthase family. As to quaternary structure, homotetramer.

The enzyme catalyses UTP + L-glutamine + ATP + H2O = CTP + L-glutamate + ADP + phosphate + 2 H(+). The catalysed reaction is L-glutamine + H2O = L-glutamate + NH4(+). It carries out the reaction UTP + NH4(+) + ATP = CTP + ADP + phosphate + 2 H(+). It participates in pyrimidine metabolism; CTP biosynthesis via de novo pathway; CTP from UDP: step 2/2. Allosterically activated by GTP, when glutamine is the substrate; GTP has no effect on the reaction when ammonia is the substrate. The allosteric effector GTP functions by stabilizing the protein conformation that binds the tetrahedral intermediate(s) formed during glutamine hydrolysis. Inhibited by the product CTP, via allosteric rather than competitive inhibition. In terms of biological role, catalyzes the ATP-dependent amination of UTP to CTP with either L-glutamine or ammonia as the source of nitrogen. Regulates intracellular CTP levels through interactions with the four ribonucleotide triphosphates. This is CTP synthase from Chloroflexus aggregans (strain MD-66 / DSM 9485).